The sequence spans 340 residues: Pre-mRNA-splicing factor cwf17 (340 aa).

WD repeat units follow at residues 48 to 87 (GHTA…KNYG), 91 to 130 (GCKG…KIRK), 133 to 173 (GHAG…CIKT), 175 to 214 (EEKY…CSHV), 217 to 256 (GHKD…SAQR), 267 to 306 (GQEH…RYVL), and 308 to 339 (GHEG…LGEL).

In terms of assembly, belongs to the 40S cdc5-associated complex (or cwf complex), a spliceosome sub-complex reminiscent of a late-stage spliceosome composed of the U2, U5 and U6 snRNAs and at least brr2, cdc5, cwf2/prp3, cwf3/syf1, cwf4/syf3, cwf5/ecm2, spp42/cwf6, cwf7/spf27, cwf8, cwf9, cwf10, cwf11, cwf12, prp45/cwf13, cwf14, cwf15, cwf16, cwf17, cwf18, cwf19, cwf20, cwf21, cwf22, cwf23, cwf24, cwf25, cwf26, cyp7/cwf27, cwf28, cwf29/ist3, lea1, msl1, prp5/cwf1, prp10, prp12/sap130, prp17, prp22, sap61, sap62, sap114, sap145, slu7, smb1, smd1, smd3, smf1, smg1 and syf2.

It is found in the nucleus. In terms of biological role, involved in mRNA splicing where it associates with cdc5 and the other cwf proteins as part of the spliceosome. This Schizosaccharomyces pombe (strain 972 / ATCC 24843) (Fission yeast) protein is Pre-mRNA-splicing factor cwf17 (cwf17).